The following is a 316-amino-acid chain: 4-hydroxyphenylacetate decarboxylase activating enzyme (316 aa).

In terms of domain architecture, Radical SAM core spans 20 to 307 (HDGPGCRTTV…QDIFLDNGIA (288 aa)). Positions 34, 38, 41, 60, 66, 69, and 105 each coordinate [4Fe-4S] cluster. Position 40–42 (40–42 (WCA)) interacts with S-adenosyl-L-methionine. The 4Fe-4S ferredoxin-type domain occupies 84–115 (NKPVIDWNICKDCESFECVNSCYYNAFKLCAK). S-adenosyl-L-methionine-binding positions include glycine 144, 193-195 (DIK), and histidine 267.

It belongs to the organic radical-activating enzymes family. Monomer. It depends on [4Fe-4S] cluster as a cofactor.

It carries out the reaction glycyl-[protein] + reduced [flavodoxin] + S-adenosyl-L-methionine = glycin-2-yl radical-[protein] + semiquinone [flavodoxin] + 5'-deoxyadenosine + L-methionine + H(+). Its function is as follows. Catalyzes activation of 4-hydroxyphenylacetate decarboxylase under anaerobic conditions by generation of an organic free radical on a glycine residue, via a homolytic cleavage of S-adenosyl-L-methionine (SAM). This chain is 4-hydroxyphenylacetate decarboxylase activating enzyme, found in Clostridioides difficile (strain CD196) (Peptoclostridium difficile).